Reading from the N-terminus, the 613-residue chain is Putative adenosylhomocysteinase 3 (613 aa).

Composition is skewed to low complexity over residues 1–14 (MSVQVVSAAAAAKV) and 35–44 (AAAVGAMVPP). Positions 1–186 (MSVQVVSAAA…KQQKNSKGSS (186 aa)) are disordered. N-acetylserine is present on serine 2. Residues 2–111 (SVQVVSAAAA…DGGEALVSPD (110 aa)) are LISN domain, inhibits interaction with ITPR1. Residues 52-68 (APAPAPAAERPPAPGPG) show a composition bias toward pro residues. Residues 70–80 (GPTAALSPAAG) show a composition bias toward low complexity. Serine 109 carries the post-translational modification Phosphoserine. The span at 137–146 (RPTKIGRRSL) shows a compositional bias: basic residues. Residues 147–166 (SRSISQSSTDSYSSAASYTD) show a composition bias toward low complexity. A phosphoserine mark is found at serine 151, serine 154, serine 157, and serine 160. 3 residues coordinate substrate: threonine 238, aspartate 312, and glutamate 337. Residue 338–340 (SVT) coordinates NAD(+). Residues lysine 367 and aspartate 371 each contribute to the substrate site. Residues asparagine 372, 403–408 (GEVGKG), glutamate 424, asparagine 459, 480–482 (MGH), and asparagine 527 contribute to the NAD(+) site.

The protein belongs to the adenosylhomocysteinase family. In terms of assembly, homotetramer. Forms heteromultimers with AHCYL1 (via the C-terminal region). Interacts with ITPR1; with lower affinity than AHCYL1 and maybe via ITPR1. Interacts with SLC4A4. Interacts with ZCCHC4. The cofactor is NAD(+). In terms of processing, phosphorylated during neuronal differentiation at the LISN domain. In terms of tissue distribution, highly expressed in cerebrum, cerebellum and kidney. Also expressed in thymus, spleen, testis, ovary and, at lower, levels in lung and liver (at protein level). In cerebellum, expressed in interneurons.

Its subcellular location is the cytoplasm. It localises to the microsome. The catalysed reaction is S-adenosyl-L-homocysteine + H2O = L-homocysteine + adenosine. It participates in amino-acid biosynthesis; L-homocysteine biosynthesis; L-homocysteine from S-adenosyl-L-homocysteine: step 1/1. Functionally, may regulate the electrogenic sodium/bicarbonate cotransporter SLC4A4 activity and Mg(2+)-sensitivity. On the contrary of its homolog AHCYL1, does not regulate ITPR1 sensitivity to inositol 1,4,5-trisphosphate. This is Putative adenosylhomocysteinase 3 (Ahcyl2) from Mus musculus (Mouse).